A 79-amino-acid chain; its full sequence is U16-theraphotoxin-Cg1a (79 aa).

An N-terminal signal peptide occupies residues 1–19 (MRALLIIAGLALFLVVCNA). The propeptide occupies 20-44 (SQVNEQRKLNEMLSVMFAVEEPQER). 3 disulfide bridges follow: Cys-47–Cys-62, Cys-54–Cys-67, and Cys-61–Cys-74.

The protein belongs to the neurotoxin 10 (Hwtx-1) family. 34 (Jztx-26) subfamily. As to expression, expressed by the venom gland.

The protein localises to the secreted. Its function is as follows. Probable ion channel inhibitor. The polypeptide is U16-theraphotoxin-Cg1a (Chilobrachys guangxiensis (Chinese earth tiger tarantula)).